Consider the following 433-residue polypeptide: uncharacterized protein (433 aa).

The protein localises to the virion. This is an uncharacterized protein from Acanthamoeba polyphaga (Amoeba).